We begin with the raw amino-acid sequence, 163 residues long: MEFYPIHILLSKLEEEIAFQQKMATTYLVSPPKYSPEVIGTVSETLRRISADLKLVSLILGELEEVQERDIKEEALILSSESLSLISLLLPAIEKYAPFFLESMKVERKPILEKLEDVMAEIENAIEKLELSSSREIIRSLEELAQSLEISLKMGERILERES.

A coiled-coil region spans residues 101–162 (LESMKVERKP…KMGERILERE (62 aa)).

This is an uncharacterized protein from Aquifex aeolicus (strain VF5).